A 614-amino-acid chain; its full sequence is Afadin- and alpha-actinin-binding protein (614 aa).

Coiled coils occupy residues 131 to 227 (MDHL…IAMD) and 266 to 293 (RQKQ…SLLS). Residues Ser-290, Ser-293, and Ser-312 each carry the phosphoserine modification. Residues 292 to 317 (LSPQKKKPRERVDDSTGTVISDVEED) form a disordered region. Positions 374-460 (ISRQDHEQET…RSFTEAAIRL (87 aa)) form a coiled coil. Residues Ser-536, Ser-540, and Ser-542 each carry the phosphoserine modification.

It belongs to the ADIP family. As to quaternary structure, interacts with afadin and alpha-actinin. Interacts with VAV2. Interacts with SSX2 and SSX3. Does not interact with SSX1 and SSX4. Interacts with PCM1. Interacts with WRAP73. In terms of tissue distribution, widely expressed, with the highest expression in brain, intermediate expression in kidney, testis, spinal cord, liver, heart, lung, skeletal muscle, ovary, fetal liver and fetal brain, and little to no expression in pancreas and spleen. All specific brain regions showed intermediate to high expression, with highest expression in amygdala. Also expressed in fetal tissues, mainly in liver and brain.

It is found in the cell junction. Its subcellular location is the adherens junction. The protein localises to the nucleus. It localises to the cytoplasm. The protein resides in the cytoskeleton. It is found in the microtubule organizing center. Its subcellular location is the centrosome. The protein localises to the centriolar satellite. It localises to the cilium basal body. Belongs to an adhesion system, which plays a role in the organization of homotypic, interneuronal and heterotypic cell-cell adherens junctions (AJs). May connect the nectin-afadin and E-cadherin-catenin system through alpha-actinin and may be involved in organization of the actin cytoskeleton at AJs through afadin and alpha-actinin. Involved in cell movement: localizes at the leading edge of moving cells in response to PDGF and is required for the formation of the leading edge and the promotion of cell movement, possibly via activation of Rac signaling. Acts as a centrosome maturation factor, probably by maintaining the integrity of the pericentriolar material and proper microtubule nucleation at mitotic spindle poles. The function seems to implicate at least in part WRAP73; the SSX2IP:WRAP73 complex is proposed to act as regulator of spindle anchoring at the mitotic centrosome. Involved in ciliogenesis. It is required for targeted recruitment of the BBSome, CEP290, RAB8, and SSTR3 to the cilia. The protein is Afadin- and alpha-actinin-binding protein (SSX2IP) of Homo sapiens (Human).